We begin with the raw amino-acid sequence, 513 residues long: uncharacterized protein (513 aa).

Transmembrane regions (helical) follow at residues 262–282 (FAIFTDNTPFVLTGPITFWQL), 304–324 (YMFLFVALYLPAIYVAVITYH), 341–361 (EPIPFPAIIEALIMEISFEAL), 382–402 (LVIGTAAVEAGIVSAPMVIIV), and 429–449 (MFLASIFGIFGIMLGTIILVL). A disordered region spans residues 489-513 (PGTYSRGNGQKGAKREDPKDEENNI). Basic and acidic residues predominate over residues 501 to 513 (AKREDPKDEENNI).

Belongs to the GerABKA family.

The protein localises to the cell membrane. This is an uncharacterized protein from Bacillus subtilis (strain 168).